The sequence spans 533 residues: Peptide chain release factor 3 (533 aa).

The tr-type G domain occupies 9–284; it reads ARRRTFAIIS…ALCELSPPPL (276 aa). Residues 18 to 25, 95 to 99, and 149 to 152 contribute to the GTP site; these read SHPDAGKT, DTPGH, and NKLD.

This sequence belongs to the TRAFAC class translation factor GTPase superfamily. Classic translation factor GTPase family. PrfC subfamily.

It is found in the cytoplasm. Increases the formation of ribosomal termination complexes and stimulates activities of RF-1 and RF-2. It binds guanine nucleotides and has strong preference for UGA stop codons. It may interact directly with the ribosome. The stimulation of RF-1 and RF-2 is significantly reduced by GTP and GDP, but not by GMP. The chain is Peptide chain release factor 3 from Cupriavidus taiwanensis (strain DSM 17343 / BCRC 17206 / CCUG 44338 / CIP 107171 / LMG 19424 / R1) (Ralstonia taiwanensis (strain LMG 19424)).